A 729-amino-acid chain; its full sequence is Polyphosphate kinase (729 aa).

Residues 1-46 (MTEAQTRTEPSESSESSEAVAPAITSAADSAPEAPPATTAPAIENP) form a disordered region. Positions 25–42 (TSAADSAPEAPPATTAPA) are enriched in low complexity. Asn-90 serves as a coordination point for ATP. Mg(2+)-binding residues include Arg-422 and Arg-452. His-482 (phosphohistidine intermediate) is an active-site residue. Tyr-515, Arg-611, and His-639 together coordinate ATP.

Belongs to the polyphosphate kinase 1 (PPK1) family. Mg(2+) is required as a cofactor. In terms of processing, an intermediate of this reaction is the autophosphorylated ppk in which a phosphate is covalently linked to a histidine residue through a N-P bond.

The enzyme catalyses [phosphate](n) + ATP = [phosphate](n+1) + ADP. Its function is as follows. Catalyzes the reversible transfer of the terminal phosphate of ATP to form a long-chain polyphosphate (polyP). In Mycolicibacterium gilvum (strain PYR-GCK) (Mycobacterium gilvum (strain PYR-GCK)), this protein is Polyphosphate kinase.